Here is a 323-residue protein sequence, read N- to C-terminus: ATP synthase gamma chain (323 aa).

The protein belongs to the ATPase gamma chain family. F-type ATPases have 2 components, CF(1) - the catalytic core - and CF(0) - the membrane proton channel. CF(1) has five subunits: alpha(3), beta(3), gamma(1), delta(1), epsilon(1). CF(0) has three main subunits: a, b and c.

Its subcellular location is the cell inner membrane. Produces ATP from ADP in the presence of a proton gradient across the membrane. The gamma chain is believed to be important in regulating ATPase activity and the flow of protons through the CF(0) complex. This chain is ATP synthase gamma chain, found in Rickettsia africae (strain ESF-5).